A 145-amino-acid chain; its full sequence is D-aminoacyl-tRNA deacylase (145 aa).

The Gly-cisPro motif, important for rejection of L-amino acids motif lies at 137–138 (GP).

It belongs to the DTD family. Homodimer.

The protein localises to the cytoplasm. The enzyme catalyses glycyl-tRNA(Ala) + H2O = tRNA(Ala) + glycine + H(+). It catalyses the reaction a D-aminoacyl-tRNA + H2O = a tRNA + a D-alpha-amino acid + H(+). In terms of biological role, an aminoacyl-tRNA editing enzyme that deacylates mischarged D-aminoacyl-tRNAs. Also deacylates mischarged glycyl-tRNA(Ala), protecting cells against glycine mischarging by AlaRS. Acts via tRNA-based rather than protein-based catalysis; rejects L-amino acids rather than detecting D-amino acids in the active site. By recycling D-aminoacyl-tRNA to D-amino acids and free tRNA molecules, this enzyme counteracts the toxicity associated with the formation of D-aminoacyl-tRNA entities in vivo and helps enforce protein L-homochirality. In Lactobacillus delbrueckii subsp. bulgaricus (strain ATCC BAA-365 / Lb-18), this protein is D-aminoacyl-tRNA deacylase.